The primary structure comprises 204 residues: MRYSSGAVEALIEEFAKLPGIGRKTAQRLTMHVLHERRSEVEKLASALIDVKEKVIRCSVCQNITDLGVDPCHICTSAGRDRSVICVVESPTEVLAFEKTGHYKGLYHVLHGVISPLDGVGPDDIKVRELIARIGVDSTGGVREVVLALNPTVEGETTSLYISKLLKPLGINVTRIARGIPVGAELEFIDEATLSRAMEGRSAI.

The segment at 58–75 adopts a C4-type zinc-finger fold; the sequence is CSVCQNITDLGVDPCHIC. Positions 83-181 constitute a Toprim domain; sequence SVICVVESPT…NVTRIARGIP (99 aa).

This sequence belongs to the RecR family.

Functionally, may play a role in DNA repair. It seems to be involved in an RecBC-independent recombinational process of DNA repair. It may act with RecF and RecO. The protein is Recombination protein RecR of Chlorobaculum tepidum (strain ATCC 49652 / DSM 12025 / NBRC 103806 / TLS) (Chlorobium tepidum).